The following is a 186-amino-acid chain: Pyridoxal 5'-phosphate synthase subunit PdxT (186 aa).

46-48 (GES) is a binding site for L-glutamine. The Nucleophile role is filled by Cys75. L-glutamine-binding positions include Arg101 and 127–128 (IR). Catalysis depends on charge relay system residues His164 and Glu166.

This sequence belongs to the glutaminase PdxT/SNO family. In the presence of PdxS, forms a dodecamer of heterodimers. Only shows activity in the heterodimer.

The catalysed reaction is aldehydo-D-ribose 5-phosphate + D-glyceraldehyde 3-phosphate + L-glutamine = pyridoxal 5'-phosphate + L-glutamate + phosphate + 3 H2O + H(+). It carries out the reaction L-glutamine + H2O = L-glutamate + NH4(+). Its pathway is cofactor biosynthesis; pyridoxal 5'-phosphate biosynthesis. Its function is as follows. Catalyzes the hydrolysis of glutamine to glutamate and ammonia as part of the biosynthesis of pyridoxal 5'-phosphate. The resulting ammonia molecule is channeled to the active site of PdxS. This Methanococcus aeolicus (strain ATCC BAA-1280 / DSM 17508 / OCM 812 / Nankai-3) protein is Pyridoxal 5'-phosphate synthase subunit PdxT.